Reading from the N-terminus, the 373-residue chain is Capsular polysaccharide phosphotransferase (373 aa).

The protein belongs to the stealth family.

Part of a capsule gene locus. Expression was not detected under standard growth conditions. The polypeptide is Capsular polysaccharide phosphotransferase (Neisseria meningitidis serogroup B).